We begin with the raw amino-acid sequence, 87 residues long: Phosphoribosyl-ATP pyrophosphatase (87 aa).

Belongs to the PRA-PH family.

The protein localises to the cytoplasm. It carries out the reaction 1-(5-phospho-beta-D-ribosyl)-ATP + H2O = 1-(5-phospho-beta-D-ribosyl)-5'-AMP + diphosphate + H(+). The protein operates within amino-acid biosynthesis; L-histidine biosynthesis; L-histidine from 5-phospho-alpha-D-ribose 1-diphosphate: step 2/9. In Thermobifida fusca (strain YX), this protein is Phosphoribosyl-ATP pyrophosphatase.